Reading from the N-terminus, the 253-residue chain is Short-chain dehydrogenase/reductase ATR9 (253 aa).

Ser15, Ser16, Ile18, Ser38, Asn39, Arg42, Asp65, and Lys129 together coordinate NADP(+). The active-site Proton donor is Ser147. Thr194 contributes to the NADP(+) binding site.

Belongs to the short-chain dehydrogenases/reductases (SDR) family.

It functions in the pathway mycotoxin biosynthesis. Its function is as follows. Short-chain dehydrogenase/reductase; part of the core atranone cluster (CAC) which products are predicted to catalyze most or all steps of mycotoxin atranone synthesis, starting from geranylgeranyl pyrophosphate (GGPP). The initial cyclization of GGPP to dolabellane is probably performed by the terpene cyclase ATR13. The Baeyer-Villiger oxidation near the end of the atranone synthesis, which converts atranones D and E to atranones F and G is predicted to be catalyzed by the monooxygenase ATR8. Of the CAC's other predicted gene products, the reducing PKS ATR6 might synthesize a polyketide chain. This polyketide is probably transferred onto the atranone backbone by the polyketide transferase ATR5. Other predicted CAC products include 4 oxygenases (ATR2, ATR3, ATR4, and ATR14), 3 short-chain reductases (ATR7, ATR9, and ATR10), and a methyltransferase (ATR12). These may all be involved in the various steps of atranone biosynthesis, although their specific roles must await experimental determination. The protein is Short-chain dehydrogenase/reductase ATR9 of Stachybotrys chlorohalonatus (strain IBT 40285).